The primary structure comprises 76 residues: MKLTCMMIVAVLFLTAWTFVTAVPHSSNALENLYLKAHHEMNNPEDSELNKRCYDGGTSCDSGIQCCSGWCIFVCL.

Residues 1-22 form the signal peptide; sequence MKLTCMMIVAVLFLTAWTFVTA. A propeptide spanning residues 23 to 52 is cleaved from the precursor; that stretch reads VPHSSNALENLYLKAHHEMNNPEDSELNKR. 3 cysteine pairs are disulfide-bonded: Cys-53/Cys-67, Cys-60/Cys-71, and Cys-66/Cys-75.

It belongs to the conotoxin O1 superfamily. Expressed by the venom duct.

Its subcellular location is the secreted. Functionally, omega-conotoxins act at presynaptic membranes, they bind and block voltage-gated calcium channels (Cav). The polypeptide is Omega-conotoxin-like TxMKLT1-0211 (Conus textile (Cloth-of-gold cone)).